The chain runs to 224 residues: Ribosomal RNA small subunit methyltransferase G (224 aa).

S-adenosyl-L-methionine is bound by residues G92, L97, 143-144 (VE), and R156.

This sequence belongs to the methyltransferase superfamily. RNA methyltransferase RsmG family.

The protein localises to the cytoplasm. The enzyme catalyses guanosine(527) in 16S rRNA + S-adenosyl-L-methionine = N(7)-methylguanosine(527) in 16S rRNA + S-adenosyl-L-homocysteine. Its function is as follows. Specifically methylates the N7 position of guanine in position 527 of 16S rRNA. This Albidiferax ferrireducens (strain ATCC BAA-621 / DSM 15236 / T118) (Rhodoferax ferrireducens) protein is Ribosomal RNA small subunit methyltransferase G.